Consider the following 576-residue polypeptide: Carboxypeptidase S (576 aa).

The Cytoplasmic segment spans residues 1–19 (MIALPVEKAPRKSLWQRHR). Lys-8 participates in a covalent cross-link: Glycyl lysine isopeptide (Lys-Gly) (interchain with G-Cter in ubiquitin). The chain crosses the membrane as a helical span at residues 20–40 (AFISGIVALIIIGTFFLTSGL). Over 41 to 576 (HPAPPHEAKR…EYIVNVNEYA (536 aa)) the chain is Lumenal. Residues 44-65 (PPHEAKRPHHGKGPMHSPKCEK) are disordered. Residue Asn-88 is glycosylated (N-linked (GlcNAc...) asparagine). His-168 provides a ligand contact to Zn(2+). Residue Asp-170 is part of the active site. The N-linked (GlcNAc...) asparagine glycan is linked to Asn-176. Residue Asp-205 coordinates Zn(2+). N-linked (GlcNAc...) asparagine glycosylation is present at Asn-228. Catalysis depends on Glu-239, which acts as the Proton acceptor. 2 residues coordinate Zn(2+): Glu-240 and Asp-268. N-linked (GlcNAc...) asparagine glycosylation is found at Asn-381 and Asn-525. His-547 contributes to the Zn(2+) binding site.

This sequence belongs to the peptidase M20A family. As to quaternary structure, yscS is synthesized as one polypeptide chain precursor which after carbohydrate modification in the secretory pathway yields two active precursor molecules. The proteolytically unprocessed forms are associated with the membrane, whereas the mature forms of the enzyme are soluble. Zn(2+) is required as a cofactor. Glycosylated. In terms of processing, ubiquitinated. Ubiquitination mediates sorting into internal vesicles in late endosomes. TUL1 is required for ubiquitination.

The protein resides in the vacuole membrane. The catalysed reaction is Release of a C-terminal amino acid from a peptide in which glycine is the penultimate amino acid, e.g. Z-Gly-|-Leu.. In terms of biological role, necessary for use of certain peptides as sole nitrogen source. May also cleave intracellularly generated peptides to recycle amino acids for protein synthesis. The chain is Carboxypeptidase S (CPS1) from Saccharomyces cerevisiae (strain ATCC 204508 / S288c) (Baker's yeast).